Here is a 140-residue protein sequence, read N- to C-terminus: MLKTISPLIPPTLLKVLAEMGHGDEIIFSDAHFPAHSLGPQVIRADGLSVSDLLRAIIPLFELDSYAPPLVMMAAVEGDTLDPSVEARYRDALSLEAPCPDIVRIDRYAFYERAQKAFAIVITGECAKYGNILLKKGVTP.

The Proton donor role is filled by His-22. Substrate is bound by residues Asp-30, Arg-107, and 129–131; that span reads YGN.

The protein belongs to the RbsD / FucU family. FucU mutarotase subfamily. Homodecamer.

The protein resides in the cytoplasm. It catalyses the reaction alpha-L-fucose = beta-L-fucose. Its pathway is carbohydrate metabolism; L-fucose metabolism. In terms of biological role, involved in the anomeric conversion of L-fucose. The polypeptide is L-fucose mutarotase (Salmonella gallinarum (strain 287/91 / NCTC 13346)).